A 366-amino-acid chain; its full sequence is uncharacterized protein (366 aa).

Positions 199–267 (QKKQIEDEEK…QLKDAQAKRD (69 aa)) are disordered.

This is an uncharacterized protein from Haemophilus influenzae (strain ATCC 51907 / DSM 11121 / KW20 / Rd).